Here is a 277-residue protein sequence, read N- to C-terminus: Bifunctional protein FolD (277 aa).

NADP(+) is bound by residues 159 to 161 (GRS), serine 184, and isoleucine 225.

Belongs to the tetrahydrofolate dehydrogenase/cyclohydrolase family. In terms of assembly, homodimer.

It carries out the reaction (6R)-5,10-methylene-5,6,7,8-tetrahydrofolate + NADP(+) = (6R)-5,10-methenyltetrahydrofolate + NADPH. The catalysed reaction is (6R)-5,10-methenyltetrahydrofolate + H2O = (6R)-10-formyltetrahydrofolate + H(+). The protein operates within one-carbon metabolism; tetrahydrofolate interconversion. Functionally, catalyzes the oxidation of 5,10-methylenetetrahydrofolate to 5,10-methenyltetrahydrofolate and then the hydrolysis of 5,10-methenyltetrahydrofolate to 10-formyltetrahydrofolate. The protein is Bifunctional protein FolD of Acholeplasma laidlawii (strain PG-8A).